We begin with the raw amino-acid sequence, 75 residues long: Transaldolase (75 aa).

This sequence belongs to the transaldolase family. Type 1 subfamily. In terms of assembly, homodimer. Phosphorylated. In terms of tissue distribution, predominantly expressed in Y-organs.

It localises to the cytoplasm. It carries out the reaction D-sedoheptulose 7-phosphate + D-glyceraldehyde 3-phosphate = D-erythrose 4-phosphate + beta-D-fructose 6-phosphate. The protein operates within carbohydrate degradation; pentose phosphate pathway; D-glyceraldehyde 3-phosphate and beta-D-fructose 6-phosphate from D-ribose 5-phosphate and D-xylulose 5-phosphate (non-oxidative stage): step 2/3. In terms of biological role, transaldolase is important for the balance of metabolites in the pentose-phosphate pathway. May play a role in the conversion of sterols into ecdysteroids via NADPH. This Carcinus maenas (Common shore crab) protein is Transaldolase.